The following is a 414-amino-acid chain: Probable cytochrome P450 127A1 (414 aa).

C364 is a binding site for heme.

The protein belongs to the cytochrome P450 family. The cofactor is heme.

Functionally, cytochromes P450 are a group of heme-thiolate monooxygenases. They oxidize a variety of structurally unrelated compounds, including steroids, fatty acids, and xenobiotics. The protein is Probable cytochrome P450 127A1 (cyp127A1) of Sinorhizobium fredii (strain NBRC 101917 / NGR234).